The sequence spans 357 residues: UDP-N-acetylglucosamine--N-acetylmuramyl-(pentapeptide) pyrophosphoryl-undecaprenol N-acetylglucosamine transferase (357 aa).

UDP-N-acetyl-alpha-D-glucosamine-binding positions include 12–14, asparagine 124, arginine 163, serine 189, isoleucine 243, 262–267, and glutamine 288; these read TGG and ALTVSE.

It belongs to the glycosyltransferase 28 family. MurG subfamily.

It localises to the cell inner membrane. It carries out the reaction di-trans,octa-cis-undecaprenyl diphospho-N-acetyl-alpha-D-muramoyl-L-alanyl-D-glutamyl-meso-2,6-diaminopimeloyl-D-alanyl-D-alanine + UDP-N-acetyl-alpha-D-glucosamine = di-trans,octa-cis-undecaprenyl diphospho-[N-acetyl-alpha-D-glucosaminyl-(1-&gt;4)]-N-acetyl-alpha-D-muramoyl-L-alanyl-D-glutamyl-meso-2,6-diaminopimeloyl-D-alanyl-D-alanine + UDP + H(+). It participates in cell wall biogenesis; peptidoglycan biosynthesis. Its function is as follows. Cell wall formation. Catalyzes the transfer of a GlcNAc subunit on undecaprenyl-pyrophosphoryl-MurNAc-pentapeptide (lipid intermediate I) to form undecaprenyl-pyrophosphoryl-MurNAc-(pentapeptide)GlcNAc (lipid intermediate II). This chain is UDP-N-acetylglucosamine--N-acetylmuramyl-(pentapeptide) pyrophosphoryl-undecaprenol N-acetylglucosamine transferase, found in Pseudomonas aeruginosa (strain LESB58).